The primary structure comprises 143 residues: Hemoglobin-1 (143 aa).

Ser-2 carries the N-acetylserine modification. The Globin domain occupies 2–143 (SLSAAQKDNV…ALMGMIRPNM (142 aa)). Position 97 (His-97) interacts with heme b.

It belongs to the globin family. As to quaternary structure, monomer.

It is found in the cytoplasm. Serves to transport hydrogen sulfide to autotrophic bacteria. The polypeptide is Hemoglobin-1 (Phacoides pectinatus (Thick lucine)).